Consider the following 186-residue polypeptide: MSIEALKARLPDYAKDLRLNLGSVLTTSSLKPGQVWGAAIAAAYAARNDDVTRAIVAEAAQHLDAAGLTAAKAAGAIMGMNNVYYRTVHLSGNADFKKIPARLRMNVIGNPGVEKVDFELWSLAASAVNGCGMCIEAHEREVMHKGMSTENIQDAVRIAAVIHAVATVLDAEAALSGQDGSTAVAA.

Catalysis depends on Cys-131, which acts as the Proton donor. An intrachain disulfide couples Cys-131 to Cys-134. The Cysteine sulfenic acid (-SOH) intermediate role is filled by Cys-134.

The protein belongs to the AhpD family.

The catalysed reaction is N(6)-[(R)-dihydrolipoyl]-L-lysyl-[lipoyl-carrier protein] + a hydroperoxide = N(6)-[(R)-lipoyl]-L-lysyl-[lipoyl-carrier protein] + an alcohol + H2O. In terms of biological role, antioxidant protein with alkyl hydroperoxidase activity. Required for the reduction of the AhpC active site cysteine residues and for the regeneration of the AhpC enzyme activity. In Rhodospirillum centenum (strain ATCC 51521 / SW), this protein is Alkyl hydroperoxide reductase AhpD.